The primary structure comprises 163 residues: Cytosolic iron-sulfur assembly component 2B (163 aa).

This sequence belongs to the MIP18 family.

It localises to the nucleus. The protein resides in the cytoplasm. It is found in the cytoskeleton. Its subcellular location is the spindle. Functionally, component of the cytosolic iron-sulfur (Fe/S) protein assembly machinery. Required for the maturation of extramitochondrial Fe/S proteins. May play a role in chromosome segregation through establishment of sister chromatid cohesion. In Dictyostelium discoideum (Social amoeba), this protein is Cytosolic iron-sulfur assembly component 2B.